The following is a 406-amino-acid chain: Argininosuccinate synthase (406 aa).

ATP is bound by residues 13–21 and A40; that span reads AYSGGLDTS. L-citrulline is bound by residues Y91 and S96. G121 is an ATP binding site. L-aspartate contacts are provided by T123, N127, and D128. N127 is an L-citrulline binding site. L-citrulline-binding residues include R131, S180, S189, E265, and Y277.

Belongs to the argininosuccinate synthase family. Type 1 subfamily. In terms of assembly, homotetramer.

The protein localises to the cytoplasm. The enzyme catalyses L-citrulline + L-aspartate + ATP = 2-(N(omega)-L-arginino)succinate + AMP + diphosphate + H(+). Its pathway is amino-acid biosynthesis; L-arginine biosynthesis; L-arginine from L-ornithine and carbamoyl phosphate: step 2/3. This chain is Argininosuccinate synthase, found in Syntrophotalea carbinolica (strain DSM 2380 / NBRC 103641 / GraBd1) (Pelobacter carbinolicus).